We begin with the raw amino-acid sequence, 508 residues long: Bifunctional purine biosynthesis protein PurH (508 aa).

Residues 1-144 (MTRALLSVSD…KNFAGVLPIV (144 aa)) enclose the MGS-like domain.

Belongs to the PurH family.

It carries out the reaction (6R)-10-formyltetrahydrofolate + 5-amino-1-(5-phospho-beta-D-ribosyl)imidazole-4-carboxamide = 5-formamido-1-(5-phospho-D-ribosyl)imidazole-4-carboxamide + (6S)-5,6,7,8-tetrahydrofolate. The catalysed reaction is IMP + H2O = 5-formamido-1-(5-phospho-D-ribosyl)imidazole-4-carboxamide. It participates in purine metabolism; IMP biosynthesis via de novo pathway; 5-formamido-1-(5-phospho-D-ribosyl)imidazole-4-carboxamide from 5-amino-1-(5-phospho-D-ribosyl)imidazole-4-carboxamide (10-formyl THF route): step 1/1. It functions in the pathway purine metabolism; IMP biosynthesis via de novo pathway; IMP from 5-formamido-1-(5-phospho-D-ribosyl)imidazole-4-carboxamide: step 1/1. The chain is Bifunctional purine biosynthesis protein PurH from Leuconostoc citreum (strain KM20).